Consider the following 158-residue polypeptide: NAD(P)H-quinone oxidoreductase subunit J, chloroplastic (158 aa).

The protein belongs to the complex I 30 kDa subunit family. As to quaternary structure, NDH is composed of at least 16 different subunits, 5 of which are encoded in the nucleus.

It is found in the plastid. Its subcellular location is the chloroplast thylakoid membrane. The catalysed reaction is a plastoquinone + NADH + (n+1) H(+)(in) = a plastoquinol + NAD(+) + n H(+)(out). It catalyses the reaction a plastoquinone + NADPH + (n+1) H(+)(in) = a plastoquinol + NADP(+) + n H(+)(out). Functionally, NDH shuttles electrons from NAD(P)H:plastoquinone, via FMN and iron-sulfur (Fe-S) centers, to quinones in the photosynthetic chain and possibly in a chloroplast respiratory chain. The immediate electron acceptor for the enzyme in this species is believed to be plastoquinone. Couples the redox reaction to proton translocation, and thus conserves the redox energy in a proton gradient. The polypeptide is NAD(P)H-quinone oxidoreductase subunit J, chloroplastic (Lupinus luteus (European yellow lupine)).